Consider the following 431-residue polypeptide: Elongation factor 1-gamma (431 aa).

One can recognise a GST N-terminal domain in the interval 2-84 (VKGTLYTYPE…LLANEQLRGG (83 aa)). Residues 86–212 (CPFVQAQVQQ…YKLCEKALVF (127 aa)) form the GST C-terminal domain. The interval 223-261 (KTGAAKPQQQAQQQKQEKKPKEKKEAPKKAAEPAEELDA) is disordered. The segment covering 226–236 (AAKPQQQAQQQ) has biased composition (low complexity). The segment covering 237 to 254 (KQEKKPKEKKEAPKKAAE) has biased composition (basic and acidic residues). Positions 272–431 (SKDPFDALPK…RKFNQGKIFK (160 aa)) constitute an EF-1-gamma C-terminal domain. Ser294 carries the phosphoserine modification.

Interacts with microtubules. May interact with BicDR; the interaction is probably indirect. Interacts (via C-terminus) with Doa; the interaction is probably direct, is transient and leads to phosphorylation of eEF1gamma by Doa. EF-1 is composed of four subunits: alpha, beta, delta, and gamma. Phosphorylated on Ser-294 by LAMMER kinases, including Doa. Phosphorylation on Ser-294 by Doa is required for negative regulation of microtubule-based transport.

It is found in the cytoplasm. The protein resides in the nucleus. The protein localises to the cytoskeleton. Its function is as follows. Microtubule binding protein involved in regulation of microtubule-based transport. Probably plays a role in anchoring the EF-1 complex to other cellular components. Probably involved in formation and/or development of mechanosensory organs during metamorphosis. Required for cellular and organismal viability. Not essential for the innate immune response to bacterial infection. This chain is Elongation factor 1-gamma, found in Drosophila melanogaster (Fruit fly).